The primary structure comprises 296 residues: MSDSTYKAGFVSIIGRPNVGKSTLLNRILGEKIVAVSDKPQTTRNVIRGILSDETSQIVFVDTPGIHTARTRINRAMVDAAMTVVTGIDLMLLVVDATQKIEETFIKDICSKAGAPIYLVLNKIDQVTPKEKLFTVIEGYTRLYDFPEIIPISAQSGSNIERLVDLVREHLPEGEALFPDDILTDLPEKFIVAELIREKVFRLTNREVPYGTAVVVEAFAERENGLVAINATIMVERDSHKGIIIGKKGVMLKKIGEQARRDIERLLGTKVYLELFVQVQERWTERTAMLRELGYE.

Residues 7–173 enclose the Era-type G domain; that stretch reads KAGFVSIIGR…VDLVREHLPE (167 aa). Residues 15-22 are G1; the sequence is GRPNVGKS. Position 15–22 (15–22) interacts with GTP; the sequence is GRPNVGKS. The G2 stretch occupies residues 41–45; it reads QTTRN. The tract at residues 62-65 is G3; the sequence is DTPG. GTP contacts are provided by residues 62–66 and 122–125; these read DTPGI and NKID. The interval 122-125 is G4; the sequence is NKID. The segment at 152-154 is G5; that stretch reads ISA. Residues 204-281 form the KH type-2 domain; it reads TNREVPYGTA…YLELFVQVQE (78 aa).

The protein belongs to the TRAFAC class TrmE-Era-EngA-EngB-Septin-like GTPase superfamily. Era GTPase family. Monomer.

It is found in the cytoplasm. The protein localises to the cell inner membrane. Its function is as follows. An essential GTPase that binds both GDP and GTP, with rapid nucleotide exchange. Plays a role in 16S rRNA processing and 30S ribosomal subunit biogenesis and possibly also in cell cycle regulation and energy metabolism. This is GTPase Era from Trichlorobacter lovleyi (strain ATCC BAA-1151 / DSM 17278 / SZ) (Geobacter lovleyi).